We begin with the raw amino-acid sequence, 185 residues long: Adenylyl-sulfate kinase (185 aa).

13-20 contributes to the ATP binding site; it reads GLSGAGKS. S86 (phosphoserine intermediate) is an active-site residue.

The protein belongs to the APS kinase family.

The catalysed reaction is adenosine 5'-phosphosulfate + ATP = 3'-phosphoadenylyl sulfate + ADP + H(+). Its pathway is sulfur metabolism; hydrogen sulfide biosynthesis; sulfite from sulfate: step 2/3. Functionally, catalyzes the synthesis of activated sulfate. The sequence is that of Adenylyl-sulfate kinase from Myxococcus xanthus (strain DK1622).